We begin with the raw amino-acid sequence, 319 residues long: Annexin A4 (319 aa).

Position 2 is an N-acetylalanine (Ala-2). The residue at position 7 (Thr-7) is a Phosphothreonine; by PKC. Position 12 is a phosphoserine (Ser-12). Annexin repeat units follow at residues 14–85 (FNAA…GMMT), 86–157 (PTVL…SLSA), 169–241 (ALVR…AIVK), and 245–316 (NKSA…ILCG). Lys-213, Lys-293, and Lys-300 each carry N6-acetyllysine.

This sequence belongs to the annexin family. In terms of assembly, monomer.

The protein localises to the zymogen granule membrane. In terms of biological role, calcium/phospholipid-binding protein which promotes membrane fusion and is involved in exocytosis. This chain is Annexin A4 (ANXA4), found in Sus scrofa (Pig).